Consider the following 392-residue polypeptide: Chalcone synthase 1 (392 aa).

Residue Cys-167 is part of the active site.

The protein belongs to the thiolase-like superfamily. Chalcone/stilbene synthases family.

It carries out the reaction (E)-4-coumaroyl-CoA + 3 malonyl-CoA + 3 H(+) = 2',4,4',6'-tetrahydroxychalcone + 3 CO2 + 4 CoA. It participates in secondary metabolite biosynthesis; flavonoid biosynthesis. The primary product of this enzyme is 4,2',4',6'-tetrahydroxychalcone (also termed naringenin-chalcone or chalcone) which can under specific conditions spontaneously isomerize into naringenin. The polypeptide is Chalcone synthase 1 (CHS1) (Secale cereale (Rye)).